A 100-amino-acid chain; its full sequence is C-X-C motif chemokine 11 (100 aa).

Positions 1–21 (MNRKVTAIALAAIIWATAAQG) are cleaved as a signal peptide. Disulfide bonds link Cys30/Cys57 and Cys32/Cys74.

The protein belongs to the intercrine alpha (chemokine CxC) family. In terms of assembly, interacts with TNFAIP6 (via Link domain).

It localises to the secreted. Chemotactic for interleukin-activated T-cells but not unstimulated T-cells, neutrophils or monocytes. Induces calcium release in activated T-cells. Binds to CXCR3. May play an important role in CNS diseases which involve T-cell recruitment. May play a role in skin immune responses. In Mus musculus (Mouse), this protein is C-X-C motif chemokine 11 (Cxcl11).